A 714-amino-acid chain; its full sequence is Fatty acid oxidation complex subunit alpha (714 aa).

The interval 1-190 is enoyl-CoA hydratase; that stretch reads MEMASAFTLN…KLGLVDDVVP (190 aa). The tract at residues 306-714 is 3-hydroxyacyl-CoA dehydrogenase; the sequence is APLNSVGILG…FWKTTATDLQ (409 aa).

This sequence in the N-terminal section; belongs to the enoyl-CoA hydratase/isomerase family. The protein in the central section; belongs to the 3-hydroxyacyl-CoA dehydrogenase family. In terms of assembly, heterotetramer of two alpha chains (FadJ) and two beta chains (FadI).

The protein localises to the cytoplasm. It carries out the reaction a (3S)-3-hydroxyacyl-CoA = a (2E)-enoyl-CoA + H2O. The enzyme catalyses a 4-saturated-(3S)-3-hydroxyacyl-CoA = a (3E)-enoyl-CoA + H2O. The catalysed reaction is a (3S)-3-hydroxyacyl-CoA + NAD(+) = a 3-oxoacyl-CoA + NADH + H(+). It catalyses the reaction (3S)-3-hydroxybutanoyl-CoA = (3R)-3-hydroxybutanoyl-CoA. The protein operates within lipid metabolism; fatty acid beta-oxidation. In terms of biological role, catalyzes the formation of a hydroxyacyl-CoA by addition of water on enoyl-CoA. Also exhibits 3-hydroxyacyl-CoA epimerase and 3-hydroxyacyl-CoA dehydrogenase activities. In Escherichia coli (strain SMS-3-5 / SECEC), this protein is Fatty acid oxidation complex subunit alpha.